The chain runs to 490 residues: MARFGTQKLYIDGAYVDAGSDATFEAINPATGEVLAHVQRATEADVEKAVESAERGQKVWAAMTAMQRSRILRRAVDILRERNDELAQLETLDTGKSYSETRYVDIVTGADVLEYYAGLVPAIEGEQIPLRESSFVYTRREPLGVTVGIGAWNYPIQIALWKSAPALAAGNAMIFKPSEVTSLTTLKLAEIYTEAGLPNGVFNVLTGSGREVGTWLTEHPRIEKVSFTGGTTTGKKVMASASSSSLKEVTMELGGKSPLIICADADLDKAADIAMMANFYSSGQVCTNGTRVFIPAEMKAAFEAKIAERVARIRVGNPEDENTNFGPLVSFAHMENVLSYIAKGKEEGARVLCGGERLTEGEFAKGAFVAPTVFTDCSDDMTIVKEEIFGPVMSILSYETEEEVIRRANDTEYGLAAGVCTNDITRAHRIIHKLEAGICWINAWGESPAEMPVGGYKQSGVGRENGVSSLAQYTRIKSVQVELGGYNSVF.

K(+) contacts are provided by I27 and D93. An NAD(+)-binding site is contributed by 150–152 (GAW). K162 acts as the Charge relay system in catalysis. 176–179 (KPSE) is a binding site for NAD(+). V180 serves as a coordination point for K(+). 230-233 (GTTT) is an NAD(+) binding site. L246 provides a ligand contact to K(+). E252 acts as the Proton acceptor in catalysis. The NAD(+) site is built by G254, C286, and E387. Catalysis depends on C286, which acts as the Nucleophile. C286 is subject to Cysteine sulfenic acid (-SOH). K457 and G460 together coordinate K(+). E464 serves as the catalytic Charge relay system.

The protein belongs to the aldehyde dehydrogenase family. As to quaternary structure, dimer of dimers. It depends on K(+) as a cofactor.

It carries out the reaction betaine aldehyde + NAD(+) + H2O = glycine betaine + NADH + 2 H(+). It functions in the pathway amine and polyamine biosynthesis; betaine biosynthesis via choline pathway; betaine from betaine aldehyde: step 1/1. Functionally, involved in the biosynthesis of the osmoprotectant glycine betaine. Catalyzes the irreversible oxidation of betaine aldehyde to the corresponding acid. The protein is Betaine aldehyde dehydrogenase of Pseudomonas putida (strain GB-1).